A 217-amino-acid chain; its full sequence is Probable transaldolase (217 aa).

Residue lysine 83 is the Schiff-base intermediate with substrate of the active site.

The protein belongs to the transaldolase family. Type 3B subfamily.

It is found in the cytoplasm. The enzyme catalyses D-sedoheptulose 7-phosphate + D-glyceraldehyde 3-phosphate = D-erythrose 4-phosphate + beta-D-fructose 6-phosphate. It participates in carbohydrate degradation; pentose phosphate pathway; D-glyceraldehyde 3-phosphate and beta-D-fructose 6-phosphate from D-ribose 5-phosphate and D-xylulose 5-phosphate (non-oxidative stage): step 2/3. Transaldolase is important for the balance of metabolites in the pentose-phosphate pathway. The sequence is that of Probable transaldolase from Brucella anthropi (strain ATCC 49188 / DSM 6882 / CCUG 24695 / JCM 21032 / LMG 3331 / NBRC 15819 / NCTC 12168 / Alc 37) (Ochrobactrum anthropi).